A 94-amino-acid chain; its full sequence is PTS system galactitol-specific EIIB component (94 aa).

The PTS EIIB type-2 domain maps to 1–94 (MKRKIIVACG…QNKILTILQG (94 aa)). Cys-9 serves as the catalytic Phosphocysteine intermediate; for EIIB activity. Cys-9 is subject to Phosphocysteine; by EIIA.

As to quaternary structure, forms a complex with one each of subunit of GatA, GatB and 2 subunits of GatC.

The protein localises to the cytoplasm. The catalysed reaction is galactitol(out) + N(pros)-phospho-L-histidyl-[protein] = galactitol 1-phosphate(in) + L-histidyl-[protein]. The phosphoenolpyruvate-dependent sugar phosphotransferase system (PTS), a major carbohydrate active transport system, catalyzes the phosphorylation of incoming sugar substrates concomitant with their translocation across the cell membrane. The enzyme II complex composed of GatA, GatB and GatC is involved in galactitol transport. In Escherichia coli O157:H7, this protein is PTS system galactitol-specific EIIB component (gatB).